Consider the following 363-residue polypeptide: LIM and cysteine-rich domains protein 1 (363 aa).

The residue at position 16 (serine 16) is a Phosphoserine. The 108-residue stretch at 99 to 206 (MIMTNPIATG…GEVALPGQGG (108 aa)) folds into the PET domain. The interval 200–234 (ALPGQGGLPKEEGKQQEKPEGAETAPPTTNGSIGD) is disordered. A compositionally biased stretch (basic and acidic residues) spans 208–220 (PKEEGKQQEKPEG). 2 consecutive LIM zinc-binding domains span residues 239 to 304 (YVCE…SLRP) and 305 to 363 (RCSG…SKRS).

In terms of assembly, interacts with beta-dystroglycan. Interacts with GATA1, GATA4 and GATA6.

The protein localises to the cytoplasm. Its subcellular location is the nucleus. In terms of biological role, transcriptional cofactor that restricts GATA6 function by inhibiting DNA-binding, resulting in repression of GATA6 transcriptional activation of downstream target genes. Represses GATA6-mediated trans activation of lung- and cardiac tissue-specific promoters. Inhibits DNA-binding by GATA4 and GATA1 to the cTNC promoter. Plays a critical role in the development of cardiac hypertrophy via activation of calcineurin/nuclear factor of activated T-cells signaling pathway. This is LIM and cysteine-rich domains protein 1 (LMCD1) from Bos taurus (Bovine).